A 185-amino-acid polypeptide reads, in one-letter code: Ribosome-recycling factor (185 aa).

Belongs to the RRF family.

The protein resides in the cytoplasm. Functionally, responsible for the release of ribosomes from messenger RNA at the termination of protein biosynthesis. May increase the efficiency of translation by recycling ribosomes from one round of translation to another. This chain is Ribosome-recycling factor, found in Desulfatibacillum aliphaticivorans.